The primary structure comprises 368 residues: Histidinol-phosphate aminotransferase (368 aa).

Lys-223 is subject to N6-(pyridoxal phosphate)lysine.

It belongs to the class-II pyridoxal-phosphate-dependent aminotransferase family. Histidinol-phosphate aminotransferase subfamily. As to quaternary structure, homodimer. Requires pyridoxal 5'-phosphate as cofactor.

It carries out the reaction L-histidinol phosphate + 2-oxoglutarate = 3-(imidazol-4-yl)-2-oxopropyl phosphate + L-glutamate. It functions in the pathway amino-acid biosynthesis; L-histidine biosynthesis; L-histidine from 5-phospho-alpha-D-ribose 1-diphosphate: step 7/9. The protein is Histidinol-phosphate aminotransferase of Rhodospirillum rubrum (strain ATCC 11170 / ATH 1.1.1 / DSM 467 / LMG 4362 / NCIMB 8255 / S1).